A 1411-amino-acid polypeptide reads, in one-letter code: Zinc finger protein 609 (1411 aa).

Disordered stretches follow at residues 1–26 (MSLS…SGDE), 47–190 (QKLE…QPVP), 353–484 (PRFC…EPTV), 517–659 (AHAH…ARPI), 679–963 (ASPG…VIQQ), 1005–1125 (YEEQ…RQAE), 1153–1221 (KSED…LTQH), and 1270–1367 (GSKV…STHH). Residues Ser358, Ser361, and Ser379 each carry the phosphoserine modification. Residues 377-401 (PNSNTPVNETATASDSKGTSNSSKT) are compositionally biased toward polar residues. A Phosphothreonine modification is found at Thr381. Phosphoserine is present on residues Ser413, Ser433, Ser446, Ser452, Ser467, and Ser470. Over residues 423-437 (ASSTSEDVKASPSSA) the composition is skewed to polar residues. A Glycyl lysine isopeptide (Lys-Gly) (interchain with G-Cter in SUMO2) cross-link involves residue Lys479. The segment at 495-520 (IDCPHPNCNKKYKHINGLKYHQAHAH) adopts a C2H2-type zinc-finger fold. Residues 519–529 (AHTDDDSKPEA) are compositionally biased toward basic and acidic residues. At Ser533 the chain carries Phosphoserine. A compositionally biased stretch (polar residues) spans 549-563 (NGASVSQKGSLSPAR). A phosphoserine mark is found at Ser576 and Ser578. Residues 626–649 (SLERKCMEKEKCKKPSSLKPEKIP) are compositionally biased toward basic and acidic residues. Polar residues predominate over residues 679-700 (ASPGSSSGLTATVAQAMPNSPQ). Residues 726–736 (DKKKKDKKKKE) show a composition bias toward basic residues. Ser743 is subject to Phosphoserine. Thr746 bears the Phosphothreonine mark. Over residues 751-764 (CRAEEGKSPFRESS) the composition is skewed to basic and acidic residues. Ser758 bears the Phosphoserine mark. Lys789 participates in a covalent cross-link: Glycyl lysine isopeptide (Lys-Gly) (interchain with G-Cter in SUMO2). A compositionally biased stretch (polar residues) spans 798-844 (FTDNAPSPSIGGSSRLENTTPTQPLTPLHVVTQNGAEASSVKTNSPA). Ser804 is subject to Phosphoserine. Thr823 is modified (phosphothreonine). Phosphoserine occurs at positions 842, 846, and 849. The span at 855 to 876 (GEGKVDSVKSKDAEQLVKEGAK) shows a compositional bias: basic and acidic residues. Residues 897–908 (SYYSPSYAQSSP) show a composition bias toward low complexity. Residues 926–950 (TKRDEEPESIEGKVKNDICEEKKPE) show a composition bias toward basic and acidic residues. Over residues 952 to 963 (SSSSQQPSVIQQ) the composition is skewed to low complexity. Basic and acidic residues predominate over residues 1020 to 1042 (GVDKKAEMGLKEREAALKEEWKQ). Position 1055 is a phosphoserine (Ser1055). A Glycyl lysine isopeptide (Lys-Gly) (interchain with G-Cter in SUMO2) cross-link involves residue Lys1061. Composition is skewed to basic and acidic residues over residues 1097–1113 (LKVK…EASE), 1153–1187 (KSED…KEST), and 1195–1208 (TSEE…EPRP). A Glycyl lysine isopeptide (Lys-Gly) (interchain with G-Cter in SUMO2) cross-link involves residue Lys1153. The span at 1286 to 1296 (PSVTCKSSSES) shows a compositional bias: polar residues. Residue Lys1297 forms a Glycyl lysine isopeptide (Lys-Gly) (interchain with G-Cter in SUMO2) linkage. The span at 1328-1337 (GCGVVGGGGS) shows a compositional bias: gly residues.

As to quaternary structure, interacts (via N-terminus) with NIPBL. Interacts with INTS13; promoting association with the integrator complex. Isoform 1: Expressed in myoblasts and myotubes. Isoform 2: Expressed in myoblasts and myotubes, with a preference in undifferentiated myoblasts.

Its subcellular location is the nucleus. Its function is as follows. Transcription factor, which activates RAG1, and possibly RAG2, transcription. Through the regulation of RAG1/2 expression, may regulate thymocyte maturation. Along with NIPBL and the multiprotein complex Integrator, promotes cortical neuron migration during brain development by regulating the transcription of crucial genes in this process. Preferentially binds promoters containing paused RNA polymerase II. Up-regulates the expression of SEMA3A, NRP1, PLXND1 and GABBR2 genes, among others. Involved in the regulation of myoblast proliferation during myogenesis. This Homo sapiens (Human) protein is Zinc finger protein 609.